The sequence spans 441 residues: ATP-dependent protease ATPase subunit HslU (441 aa).

ATP is bound by residues Ile-18, 60-65 (GVGKTE), Asp-254, Glu-319, and Arg-391.

Belongs to the ClpX chaperone family. HslU subfamily. In terms of assembly, a double ring-shaped homohexamer of HslV is capped on each side by a ring-shaped HslU homohexamer. The assembly of the HslU/HslV complex is dependent on binding of ATP.

The protein resides in the cytoplasm. Its function is as follows. ATPase subunit of a proteasome-like degradation complex; this subunit has chaperone activity. The binding of ATP and its subsequent hydrolysis by HslU are essential for unfolding of protein substrates subsequently hydrolyzed by HslV. HslU recognizes the N-terminal part of its protein substrates and unfolds these before they are guided to HslV for hydrolysis. This chain is ATP-dependent protease ATPase subunit HslU, found in Shewanella piezotolerans (strain WP3 / JCM 13877).